We begin with the raw amino-acid sequence, 453 residues long: BPI fold-containing family B member 6 (453 aa).

The signal sequence occupies residues 1-18; the sequence is MLRILCLALCSLLTGTRA. Asn-114 is a glycosylation site (N-linked (GlcNAc...) asparagine). Cys-137 and Cys-174 are disulfide-bonded. Asn-190 is a glycosylation site (N-linked (GlcNAc...) asparagine).

This sequence belongs to the BPI/LBP/Plunc superfamily. BPI/LBP family. Detected at very low levels in normal tonsils, and at higher levels in hypertrophic tonsils.

It localises to the secreted. This Homo sapiens (Human) protein is BPI fold-containing family B member 6 (BPIFB6).